The chain runs to 103 residues: Large ribosomal subunit protein uL24 (103 aa).

The protein belongs to the universal ribosomal protein uL24 family. Part of the 50S ribosomal subunit.

Its function is as follows. One of two assembly initiator proteins, it binds directly to the 5'-end of the 23S rRNA, where it nucleates assembly of the 50S subunit. One of the proteins that surrounds the polypeptide exit tunnel on the outside of the subunit. This chain is Large ribosomal subunit protein uL24, found in Geobacillus stearothermophilus (Bacillus stearothermophilus).